The sequence spans 144 residues: Large ribosomal subunit protein uL15 (144 aa).

The interval 1 to 58 (MRLNTLSPAAGSKPSKKRVGRGIGSGLGKTGGRGHKGQKSRSGGSVRPGFEGGQMPLK) is disordered. Residues 21–31 (RGIGSGLGKTG) are compositionally biased toward gly residues.

Belongs to the universal ribosomal protein uL15 family. As to quaternary structure, part of the 50S ribosomal subunit.

Functionally, binds to the 23S rRNA. This Vibrio atlanticus (strain LGP32) (Vibrio splendidus (strain Mel32)) protein is Large ribosomal subunit protein uL15.